Reading from the N-terminus, the 596-residue chain is MLFLRFKFFNNRLLFVSVLCFVICVSCKREHKEIKIKGEKATELKLPERPNILWLVTEDMGAYIPPFGDSTVVTPHLSKLAKEGVIYPNLYSTSGVCAPSRAAIATGMYPSSIGANHMRTNSFTKERGLPAYEAVPPSNVRMLSEWLRKAGYYCTNNYKTDYQFKAPVTAWDESSPYAHWRNRNDDQPFFAVFNFTDTHESGLFEPYGLREIETRLYRAGDTTYQWKNYGASHANNRMSEAETPQYLSKDTKFNIPPYLPETDLVKRDMWKLYNNIGEMDNQVGAVLQQLEDDGLLENTIIFFYGDHGGPLPREKRLIYDSGLNTPMIIRFPNKLEAETSDPQLISFVDFAPTLLSIIGEKPKEYMQGQAFLGQYKNKERSYIHAAADRFDAETDVIRAVRDKRFKYIRNYRPEQGYYLPIDYRERIPTMQELLRLKAEGKLNEEQMQWFRDVKPEEELFDCKSDPFELKNLANNPEYQNKLVELRKELDRWLTAIGDDANLPESELINKLWNGSNTQPVTSDPKVSINNGNITISCDTEGASVGYKIVTAGNKTSKTWHIYNGPFKMPLGSTLEIIAHRIGFKPSKAIQISTSDL.

The first 27 residues, 1-27, serve as a signal peptide directing secretion; it reads MLFLRFKFFNNRLLFVSVLCFVICVSC. Residues Glu58, Asp59, Cys97, Asp306, and His307 each contribute to the Ca(2+) site. The active-site Nucleophile is the Cys97. Position 97 is a 3-oxoalanine (Cys) (Cys97).

Belongs to the sulfatase family. It depends on Ca(2+) as a cofactor. Post-translationally, the conversion to 3-oxoalanine (also known as C-formylglycine, FGly), of a serine or cysteine residue in prokaryotes and of a cysteine residue in eukaryotes, is critical for catalytic activity.

The protein resides in the periplasm. Functionally, sulfatase involved in ulvan degradation. Ulvan is the main polysaccharide component of the Ulvales (green seaweed) cell wall. It is composed of disaccharide building blocks comprising 3-sulfated rhamnose (Rha3S) linked to D-glucuronic acid (GlcA), L-iduronic acid (IduA), or D-xylose (Xyl). The sulfatase desulfates Xyl2S-Rha3S, product of the degradation of ulvan by endo-acting alpha-1,4-L-rhamnosidase, to Xyl-Rha3S. The sequence is that of Ulvan-active sulfatase from Formosa agariphila (strain DSM 15362 / KCTC 12365 / LMG 23005 / KMM 3901 / M-2Alg 35-1).